A 500-amino-acid chain; its full sequence is Probable malate:quinone oxidoreductase (500 aa).

This sequence belongs to the MQO family. It depends on FAD as a cofactor.

The catalysed reaction is (S)-malate + a quinone = a quinol + oxaloacetate. The protein operates within carbohydrate metabolism; tricarboxylic acid cycle; oxaloacetate from (S)-malate (quinone route): step 1/1. This Bacillus cereus (strain ZK / E33L) protein is Probable malate:quinone oxidoreductase.